The following is a 199-amino-acid chain: Putative peroxiredoxin ycf42 (199 aa).

Residues 8–165 (LRVGQLAPDF…TLRVLQAIQY (158 aa)) form the Thioredoxin domain. Cys-53 (cysteine sulfenic acid (-SOH) intermediate) is an active-site residue.

This sequence belongs to the peroxiredoxin family. AhpC/Prx1 subfamily. In terms of assembly, homodimer; disulfide-linked, upon oxidation. Post-translationally, the Cys-53-SH group is the primary site of oxidation by H(2)O(2), and the oxidized Cys-53 (probably Cys-SOH) rapidly reacts with Cys-174-SH of the other subunit to form an intermolecular disulfide. This disulfide is subsequently reduced by thioredoxin.

The protein resides in the plastid. The protein localises to the chloroplast. The enzyme catalyses a hydroperoxide + [thioredoxin]-dithiol = an alcohol + [thioredoxin]-disulfide + H2O. Functionally, thiol-specific peroxidase that catalyzes the reduction of hydrogen peroxide and organic hydroperoxides to water and alcohols, respectively. Plays a role in cell protection against oxidative stress by detoxifying peroxides. The protein is Putative peroxiredoxin ycf42 (ycf42) of Pyropia yezoensis (Susabi-nori).